The chain runs to 129 residues: NADH-quinone oxidoreductase subunit A (129 aa).

3 helical membrane passes run 6-26, 63-83, and 89-109; these read FWPFILYAGMVLVLVALIVGF, LVAVLFVIFDMEAAFIFAWAV, and GWIGYGGALAFITILGVALIY.

This sequence belongs to the complex I subunit 3 family. In terms of assembly, NDH-1 is composed of 14 different subunits. Subunits NuoA, H, J, K, L, M, N constitute the membrane sector of the complex.

Its subcellular location is the cell inner membrane. It carries out the reaction a quinone + NADH + 5 H(+)(in) = a quinol + NAD(+) + 4 H(+)(out). Its function is as follows. NDH-1 shuttles electrons from NADH, via FMN and iron-sulfur (Fe-S) centers, to quinones in the respiratory chain. The immediate electron acceptor for the enzyme in this species is believed to be ubiquinone. Couples the redox reaction to proton translocation (for every two electrons transferred, four hydrogen ions are translocated across the cytoplasmic membrane), and thus conserves the redox energy in a proton gradient. The chain is NADH-quinone oxidoreductase subunit A from Nitrosococcus oceani (strain ATCC 19707 / BCRC 17464 / JCM 30415 / NCIMB 11848 / C-107).